The sequence spans 184 residues: HVA22-like protein c (184 aa).

The next 3 membrane-spanning stretches (helical) occupy residues 13–33, 51–71, and 73–93; these read VLIK…YPLY, LTYW…SKPL, and WFPI…LPQF.

Belongs to the DP1 family. As to expression, predominantly expressed in flower buds and stem.

The protein resides in the membrane. The sequence is that of HVA22-like protein c (HVA22C) from Arabidopsis thaliana (Mouse-ear cress).